We begin with the raw amino-acid sequence, 352 residues long: Protein-glutamate methylesterase/protein-glutamine glutaminase 2 (352 aa).

A Response regulatory domain is found at 1–116 (MVVDDSAVVR…KQFLTDSADE (116 aa)). 4-aspartylphosphate is present on aspartate 50. The CheB-type methylesterase domain occupies 162-352 (AQTTERIVAI…MAREIVTQLQ (191 aa)). Residues serine 174, histidine 200, and aspartate 296 contribute to the active site.

The protein belongs to the CheB family. Post-translationally, phosphorylated by CheA. Phosphorylation of the N-terminal regulatory domain activates the methylesterase activity.

It localises to the cytoplasm. The catalysed reaction is [protein]-L-glutamate 5-O-methyl ester + H2O = L-glutamyl-[protein] + methanol + H(+). It carries out the reaction L-glutaminyl-[protein] + H2O = L-glutamyl-[protein] + NH4(+). In terms of biological role, involved in chemotaxis. Part of a chemotaxis signal transduction system that modulates chemotaxis in response to various stimuli. Catalyzes the demethylation of specific methylglutamate residues introduced into the chemoreceptors (methyl-accepting chemotaxis proteins or MCP) by CheR. Also mediates the irreversible deamidation of specific glutamine residues to glutamic acid. The polypeptide is Protein-glutamate methylesterase/protein-glutamine glutaminase 2 (Xanthomonas euvesicatoria pv. vesicatoria (strain 85-10) (Xanthomonas campestris pv. vesicatoria)).